The following is a 113-amino-acid chain: MNMTLNKRWCLTAILALSAVVYTSSSYAATDRLVIESGDSAQSRQQASMEKEQWNDTRSLRQKVNKRAEKEWDKADVAFDAQDNCQKSANVNAYWEPNTLRCLDRRTGRAINP.

Positions 1–28 (MNMTLNKRWCLTAILALSAVVYTSSSYA) are cleaved as a signal peptide. Positions 38–60 (GDSAQSRQQASMEKEQWNDTRSL) are disordered. Polar residues predominate over residues 39-48 (DSAQSRQQAS). A compositionally biased stretch (basic and acidic residues) spans 49–59 (MEKEQWNDTRS).

The protein belongs to the UPF0482 family.

This chain is UPF0482 protein KPN78578_15540, found in Klebsiella pneumoniae subsp. pneumoniae (strain ATCC 700721 / MGH 78578).